A 713-amino-acid chain; its full sequence is tRNA 5-methylaminomethyl-2-thiouridine biosynthesis bifunctional protein MnmC (713 aa).

Residues 1-300 are tRNA (mnm(5)s(2)U34)-methyltransferase; it reads MTAEPNKPCQ…MAAILSSATP (300 aa). The segment at 306-713 is FAD-dependent cmnm(5)s(2)U34 oxidoreductase; sequence IGGGLASAHL…LRKLLKGKAL (408 aa).

In the N-terminal section; belongs to the methyltransferase superfamily. tRNA (mnm(5)s(2)U34)-methyltransferase family. The protein in the C-terminal section; belongs to the DAO family. Requires FAD as cofactor.

The protein localises to the cytoplasm. The enzyme catalyses 5-aminomethyl-2-thiouridine(34) in tRNA + S-adenosyl-L-methionine = 5-methylaminomethyl-2-thiouridine(34) in tRNA + S-adenosyl-L-homocysteine + H(+). Functionally, catalyzes the last two steps in the biosynthesis of 5-methylaminomethyl-2-thiouridine (mnm(5)s(2)U) at the wobble position (U34) in tRNA. Catalyzes the FAD-dependent demodification of cmnm(5)s(2)U34 to nm(5)s(2)U34, followed by the transfer of a methyl group from S-adenosyl-L-methionine to nm(5)s(2)U34, to form mnm(5)s(2)U34. The protein is tRNA 5-methylaminomethyl-2-thiouridine biosynthesis bifunctional protein MnmC of Shewanella baltica (strain OS155 / ATCC BAA-1091).